A 109-amino-acid polypeptide reads, in one-letter code: Parvalbumin beta (109 aa).

Serine 1 carries the N-acetylserine modification. 2 EF-hand domains span residues lysine 38–serine 73 and leucine 77–alanine 109. Ca(2+)-binding residues include aspartate 51, aspartate 53, serine 55, phenylalanine 57, glutamate 59, glutamate 62, aspartate 90, aspartate 92, aspartate 94, lysine 96, and glutamate 101.

This sequence belongs to the parvalbumin family.

In terms of biological role, in muscle, parvalbumin is thought to be involved in relaxation after contraction. It binds two calcium ions. The sequence is that of Parvalbumin beta from Opsanus tau (Oyster toadfish).